A 169-amino-acid chain; its full sequence is Deoxyuridine 5'-triphosphate nucleotidohydrolase (169 aa).

Residues 1–10 show a composition bias toward polar residues; the sequence is MAENQINSPE. The interval 1-25 is disordered; it reads MAENQINSPEITEPSPKVQKLDHPE. Substrate-binding positions include 91–93, 105–108, Gly-116, Arg-159, and 164–165; these read RSG, GVID, and FG.

Belongs to the dUTPase family. As to quaternary structure, homodimer. Mg(2+) is required as a cofactor. Vegetative and floral merismatic cells and provascular and vascular merismatic derivatives.

It catalyses the reaction dUTP + H2O = dUMP + diphosphate + H(+). It functions in the pathway pyrimidine metabolism; dUMP biosynthesis; dUMP from dCTP (dUTP route): step 2/2. Functionally, this enzyme is involved in nucleotide metabolism: it produces dUMP, the immediate precursor of thymidine nucleotides and it decreases the intracellular concentration of dUTP so that uracil cannot be incorporated into DNA. It may have as well a metabolic role in merismatic cells. The sequence is that of Deoxyuridine 5'-triphosphate nucleotidohydrolase from Solanum lycopersicum (Tomato).